A 35-amino-acid chain; its full sequence is Probable endonuclease 4 (35 aa).

Zn(2+) is bound at residue Glu15.

Belongs to the AP endonuclease 2 family. The cofactor is Zn(2+).

It carries out the reaction Endonucleolytic cleavage to 5'-phosphooligonucleotide end-products.. Endonuclease IV plays a role in DNA repair. It cleaves phosphodiester bonds at apurinic or apyrimidinic (AP) sites, generating a 3'-hydroxyl group and a 5'-terminal sugar phosphate. This chain is Probable endonuclease 4 (nfo), found in Yersinia enterocolitica.